A 238-amino-acid polypeptide reads, in one-letter code: Large ribosomal subunit protein uL2 (238 aa).

2 disordered regions span residues Met1 to Ser34 and Val197 to Arg238. The span at Lys224–Arg238 shows a compositional bias: basic residues.

It belongs to the universal ribosomal protein uL2 family. Part of the 50S ribosomal subunit. Forms a bridge to the 30S subunit in the 70S ribosome.

In terms of biological role, one of the primary rRNA binding proteins. Required for association of the 30S and 50S subunits to form the 70S ribosome, for tRNA binding and peptide bond formation. It has been suggested to have peptidyltransferase activity; this is somewhat controversial. Makes several contacts with the 16S rRNA in the 70S ribosome. This is Large ribosomal subunit protein uL2 from Aeropyrum pernix (strain ATCC 700893 / DSM 11879 / JCM 9820 / NBRC 100138 / K1).